Consider the following 182-residue polypeptide: Ribulose bisphosphate carboxylase small subunit, chloroplastic 3 (182 aa).

A chloroplast-targeting transit peptide spans Met-1–Arg-41.

This sequence belongs to the RuBisCO small chain family. As to quaternary structure, heterohexadecamer of 8 large and 8 small subunits.

It is found in the plastid. The protein resides in the chloroplast. RuBisCO catalyzes two reactions: the carboxylation of D-ribulose 1,5-bisphosphate, the primary event in carbon dioxide fixation, as well as the oxidative fragmentation of the pentose substrate. Both reactions occur simultaneously and in competition at the same active site. Although the small subunit is not catalytic it is essential for maximal activity. The polypeptide is Ribulose bisphosphate carboxylase small subunit, chloroplastic 3 (Acetabularia acetabulum (Mermaid's wine glass)).